A 687-amino-acid chain; its full sequence is Carboxysome assembly protein CcmM (687 aa).

The rbcS-like repeat 1, SSUL1 stretch occupies residues 242-327 (SINSDITNQI…RVVEVIIQRP (86 aa)). Disordered regions lie at residues 328–355 (GDVP…SAVA) and 442–476 (VHRP…SSAG). Polar residues predominate over residues 335–346 (SRGTTTTKALSS). The interval 366 to 445 (ANQLRALLHQ…RVAEIVVHRP (80 aa)) is rbcS-like repeat 2, SSUL2. Positions 451–472 (GKPSSSSSSVGYKSAPVSSAGG) are enriched in low complexity. The rbcS-like repeat 3, SSUL3 stretch occupies residues 480 to 562 (PEVIATVRGL…RVLEQIIQRP (83 aa)). The disordered stretch occupies residues 565-590 (NVVAGRSPSSSSASTSSSASSNGFGS). Over residues 568 to 587 (AGRSPSSSSASTSSSASSNG) the composition is skewed to low complexity. Residues 599-687 (SAVRLDNSVV…RVLETIIQRP (89 aa)) form a rbcS-like repeat 4, SSUL4 region.

It belongs to the gamma-class carbonic anhydrase family. In terms of assembly, probably forms homotrimers. Full length CcmM interacts with CcaA, CcmK1, CcmK2, CcmK4, CcmL, CcmN and itself, while the N-terminus of CcmM (first 249 residues) only interacts with CcaA, CcmM and CcmN. A probable CcmM-CcaA-CcmN complex as well as a CcaA-RuBisCO-CcmM complex can also be isolated. Interacts with full-length CcaA and the first 220 residues of CcaA; surface residues Gln-177 to Gln-188 are responsible in part for binding. Multiple forms of the protein of 73 (full length), 62, 52 (the most predominant form) and 36 kDa are seen even in the presence of protease inhibitors. CcmM52 interacts with CcaA.

It is found in the carboxysome. Functionally, functions as a scaffold protein for the assembly of beta-carboxysomes, initiates carboxysome assembly via its N-terminal domain binding to CcaA, CcmK and CcmL. Binds HCO(3)-, suggesting it may play a role in the activity or regulation of bicarbonate dehydration. Also initiates carboxysome assembly by coalescing RuBisCO (ribulose bisphosphate carboxylase, rbcL-rbcS) via its SSU-like domains. Produced as a full-length and a shorter form; both forms are required for correct carboxysome assembly and growth. Despite its strong similarity to gamma-class carbonic anhydrase (CA) it does not have detectable CA activity. Its function is as follows. Beta-carboxysome assembly initiates when soluble RuBisCO is condensed into a liquid matrix in a pre-carboxysome by the RbcS-like domains of probably both forms of CcmM. CcmN interacts with the N-terminus of full length CcmM, and then recruits the shell proteins (CcmK) via CcmN's encapsulation peptide. CcmM73 also interacts with CcmK proteins and CcmL directly. Shell formation requires CcmK proteins and CcmO. CcmL caps the otherwise elongated carboxysome. Once fully encapsulated carboxysomes are formed, they migrate within the cell probably via interactions with the cytoskeleton. This Synechocystis sp. (strain ATCC 27184 / PCC 6803 / Kazusa) protein is Carboxysome assembly protein CcmM.